Here is a 188-residue protein sequence, read N- to C-terminus: Putative lipoprotein LprB (188 aa).

The first 27 residues, 1 to 27 (MRCDVRALALAARGLIELMIVIPMVAG), serve as a signal peptide directing secretion. A lipid anchor (N-palmitoyl cysteine) is attached at Cys-28. Cys-28 carries S-diacylglycerol cysteine lipidation.

The protein localises to the cell membrane. The chain is Putative lipoprotein LprB (lprB) from Mycobacterium leprae (strain TN).